The primary structure comprises 1030 residues: Putative pentatricopeptide repeat-containing protein At5g06400, mitochondrial (1030 aa).

The N-terminal 77 residues, 1–77 (MKALFRFKSC…VKLDETTRLR (77 aa)), are a transit peptide targeting the mitochondrion. PPR repeat units follow at residues 188–222 (RVGI…GCDK), 223–257 (DIRT…GFEL), 258–292 (DATA…GITF), 293–323 (GLRT…MVRI), 328–362 (EHDA…EMCL), 363–393 (DAKY…MKRR), 397–431 (DSNV…GRPP), 432–466 (RVST…GIEP), 467–501 (DSVA…GIKP), 502–536 (TWKS…KIVI), 677–711 (NSEA…GCLI), 712–746 (TQDT…GLIP), 747–783 (SSST…GFVP), 784–814 (DREL…LGKI), 818–852 (VTVA…RSLL), 853–887 (DQYT…GTKP), 888–922 (GVHV…SCEP), 923–957 (SVVT…GTSP), and 958–992 (DFKT…GIAP).

It belongs to the PPR family. P subfamily.

It localises to the mitochondrion. This chain is Putative pentatricopeptide repeat-containing protein At5g06400, mitochondrial, found in Arabidopsis thaliana (Mouse-ear cress).